A 227-amino-acid polypeptide reads, in one-letter code: Protein rapunzel (227 aa).

A helical transmembrane segment spans residues 179–196; sequence LAYLFCIGFIALMGYYGI.

It localises to the membrane. This chain is Protein rapunzel, found in Danio rerio (Zebrafish).